The following is a 142-amino-acid chain: Photosystem II extrinsic protein U (142 aa).

The first 28 residues, 1–28 (MKKIGLLLTIFSLCLGCLGLVPSDKAHA), serve as a signal peptide directing secretion.

The protein belongs to the PsbU family. As to quaternary structure, PSII is composed of 1 copy each of membrane proteins PsbA, PsbB, PsbC, PsbD, PsbE, PsbF, PsbH, PsbI, PsbJ, PsbK, PsbL, PsbM, PsbT, PsbX, PsbY, PsbZ, Psb30/Ycf12, peripheral proteins PsbO, CyanoQ (PsbQ), PsbU, PsbV and a large number of cofactors. It forms dimeric complexes.

The protein resides in the cellular thylakoid membrane. One of the extrinsic, lumenal subunits of photosystem II (PSII). PSII is a light-driven water plastoquinone oxidoreductase, using light energy to abstract electrons from H(2)O, generating a proton gradient subsequently used for ATP formation. The extrinsic proteins stabilize the structure of photosystem II oxygen-evolving complex (OEC), the ion environment of oxygen evolution and protect the OEC against heat-induced inactivation. This Trichodesmium erythraeum (strain IMS101) protein is Photosystem II extrinsic protein U.